The sequence spans 62 residues: Large ribosomal subunit protein bL32 (62 aa).

Positions 1-19 (MAVPKRKTSKTRRDKRRAS) are enriched in basic residues. Positions 1 to 20 (MAVPKRKTSKTRRDKRRASS) are disordered.

The protein belongs to the bacterial ribosomal protein bL32 family.

The chain is Large ribosomal subunit protein bL32 from Finegoldia magna (strain ATCC 29328 / DSM 20472 / WAL 2508) (Peptostreptococcus magnus).